The following is a 594-amino-acid chain: NADH-ubiquinone oxidoreductase chain 5 (594 aa).

Transmembrane regions (helical) follow at residues 1–21 (MNLFSSTTLTMLFVLTLPIMM), 43–63 (AFLISLVPMIAFTNTGQEMII), 87–107 (IVFAPVALFVTWSIMEFSMWY), 114–134 (INQFFKYLLLFLITMMILVTA), 137–157 (LFQLFIGWEGVGIMSFLLIGW), 171–191 (AILYNRIGDVGFIMAMAWFLS), 211–233 (LPLMGLILAATGKSAQFGLHPWL), 241–261 (TPVSALLHSSTMVVAGVFLLI), 272–292 (LMQTITMCLGAITTLFTAMCA), 301–320 (IIAFSTSSQLGLMMVTIGIN), 325–347 (AFLHICTHAFFKAMLFMCSGSII), 366–386 (MPFTTTTLIVGSMALTGVPFL), 409–429 (LLITLVATSLTAVYSTRIIFF), 457–477 (LMAGSIFAGFILSHNLPPMTT), and 486–506 (LKMTALAVTMLGFTLAFEITL).

Belongs to the complex I subunit 5 family. In terms of assembly, core subunit of respiratory chain NADH dehydrogenase (Complex I) which is composed of 45 different subunits.

Its subcellular location is the mitochondrion inner membrane. The catalysed reaction is a ubiquinone + NADH + 5 H(+)(in) = a ubiquinol + NAD(+) + 4 H(+)(out). In terms of biological role, core subunit of the mitochondrial membrane respiratory chain NADH dehydrogenase (Complex I) which catalyzes electron transfer from NADH through the respiratory chain, using ubiquinone as an electron acceptor. Essential for the catalytic activity and assembly of complex I. In Hippopotamus amphibius (Hippopotamus), this protein is NADH-ubiquinone oxidoreductase chain 5 (MT-ND5).